Consider the following 218-residue polypeptide: Adenylate kinase (218 aa).

Gly-10–Thr-15 serves as a coordination point for ATP. Residues Ser-30–Val-59 form an NMP region. Residues Thr-31, Arg-36, Gly-57–Val-59, Gly-85–Arg-88, and Gln-92 contribute to the AMP site. The LID stretch occupies residues Gly-122–Asp-159. Residues Arg-123 and Ser-132–Tyr-133 each bind ATP. AMP contacts are provided by Arg-156 and Arg-167. Position 203 (Gly-203) interacts with ATP.

The protein belongs to the adenylate kinase family. In terms of assembly, monomer.

Its subcellular location is the cytoplasm. It carries out the reaction AMP + ATP = 2 ADP. Its pathway is purine metabolism; AMP biosynthesis via salvage pathway; AMP from ADP: step 1/1. In terms of biological role, catalyzes the reversible transfer of the terminal phosphate group between ATP and AMP. Plays an important role in cellular energy homeostasis and in adenine nucleotide metabolism. The chain is Adenylate kinase from Bordetella petrii (strain ATCC BAA-461 / DSM 12804 / CCUG 43448).